The primary structure comprises 117 residues: Large ribosomal subunit protein eL34 (117 aa).

It belongs to the eukaryotic ribosomal protein eL34 family. As to quaternary structure, component of the large ribosomal subunit.

The protein localises to the cytoplasm. It is found in the cytosol. The protein resides in the endoplasmic reticulum. In terms of biological role, component of the large ribosomal subunit. The ribosome is a large ribonucleoprotein complex responsible for the synthesis of proteins in the cell. This Ictalurus punctatus (Channel catfish) protein is Large ribosomal subunit protein eL34 (rpl34).